Here is a 436-residue protein sequence, read N- to C-terminus: D-amino acid dehydrogenase (436 aa).

Ile-3–Tyr-17 provides a ligand contact to FAD.

The protein belongs to the DadA oxidoreductase family. FAD serves as cofactor.

It carries out the reaction a D-alpha-amino acid + A + H2O = a 2-oxocarboxylate + AH2 + NH4(+). It functions in the pathway amino-acid degradation; D-alanine degradation; NH(3) and pyruvate from D-alanine: step 1/1. Oxidative deamination of D-amino acids. This Cereibacter sphaeroides (strain ATCC 17023 / DSM 158 / JCM 6121 / CCUG 31486 / LMG 2827 / NBRC 12203 / NCIMB 8253 / ATH 2.4.1.) (Rhodobacter sphaeroides) protein is D-amino acid dehydrogenase.